We begin with the raw amino-acid sequence, 263 residues long: Glucosamine-6-phosphate deaminase 2 (263 aa).

Asp-82 functions as the Proton acceptor; for enolization step in the catalytic mechanism. Residue Asn-151 is the For ring-opening step of the active site. The active-site Proton acceptor; for ring-opening step is His-153. The active-site For ring-opening step is Glu-158.

The protein belongs to the glucosamine/galactosamine-6-phosphate isomerase family. Homohexamer.

The enzyme catalyses alpha-D-glucosamine 6-phosphate + H2O = beta-D-fructose 6-phosphate + NH4(+). Catalyzes the reversible conversion of alpha-D-glucosamine 6-phosphate (GlcN-6P) into beta-D-fructose 6-phosphate (Fru-6P) and ammonium ion, a regulatory reaction step in de novo uridine diphosphate-N-acetyl-alpha-D-glucosamine (UDP-GlcNAc) biosynthesis via hexosamine pathway. The chain is Glucosamine-6-phosphate deaminase 2 (GPI2) from Giardia intestinalis (Giardia lamblia).